Consider the following 237-residue polypeptide: Thiamine-phosphate synthase (237 aa).

Residues 41-45 (QLRDK) and asparagine 73 each bind 4-amino-2-methyl-5-(diphosphooxymethyl)pyrimidine. The Mg(2+) site is built by aspartate 74 and aspartate 93. Position 112 (serine 112) interacts with 4-amino-2-methyl-5-(diphosphooxymethyl)pyrimidine. Residue 143 to 145 (TPT) participates in 2-[(2R,5Z)-2-carboxy-4-methylthiazol-5(2H)-ylidene]ethyl phosphate binding. A 4-amino-2-methyl-5-(diphosphooxymethyl)pyrimidine-binding site is contributed by lysine 146. Glycine 192 contributes to the 2-[(2R,5Z)-2-carboxy-4-methylthiazol-5(2H)-ylidene]ethyl phosphate binding site.

This sequence belongs to the thiamine-phosphate synthase family. Requires Mg(2+) as cofactor.

The enzyme catalyses 2-[(2R,5Z)-2-carboxy-4-methylthiazol-5(2H)-ylidene]ethyl phosphate + 4-amino-2-methyl-5-(diphosphooxymethyl)pyrimidine + 2 H(+) = thiamine phosphate + CO2 + diphosphate. It carries out the reaction 2-(2-carboxy-4-methylthiazol-5-yl)ethyl phosphate + 4-amino-2-methyl-5-(diphosphooxymethyl)pyrimidine + 2 H(+) = thiamine phosphate + CO2 + diphosphate. The catalysed reaction is 4-methyl-5-(2-phosphooxyethyl)-thiazole + 4-amino-2-methyl-5-(diphosphooxymethyl)pyrimidine + H(+) = thiamine phosphate + diphosphate. It participates in cofactor biosynthesis; thiamine diphosphate biosynthesis; thiamine phosphate from 4-amino-2-methyl-5-diphosphomethylpyrimidine and 4-methyl-5-(2-phosphoethyl)-thiazole: step 1/1. Its function is as follows. Condenses 4-methyl-5-(beta-hydroxyethyl)thiazole monophosphate (THZ-P) and 2-methyl-4-amino-5-hydroxymethyl pyrimidine pyrophosphate (HMP-PP) to form thiamine monophosphate (TMP). This chain is Thiamine-phosphate synthase, found in Arthrobacter sp. (strain FB24).